The chain runs to 75 residues: MARYFRRRKFCRFTAEGVQEIDYKDIATLKNYITESGKIVPSRITGTRAKYQRQLARAIKRARYLSLLPYTDRHQ.

The protein belongs to the bacterial ribosomal protein bS18 family. In terms of assembly, part of the 30S ribosomal subunit. Forms a tight heterodimer with protein bS6.

In terms of biological role, binds as a heterodimer with protein bS6 to the central domain of the 16S rRNA, where it helps stabilize the platform of the 30S subunit. This Klebsiella pneumoniae (strain 342) protein is Small ribosomal subunit protein bS18.